A 435-amino-acid chain; its full sequence is MVKCSLIRALMVIAGLIGAAAFTTPANALVTLDLRKGNVQPMPIAVTDFQGDLGAQVSQVIAADLQRSGLFAPINKTAFIEKISNPDAAPRFEDWKVINAQALVTGRVTKEADGRLRAEFRLWDPFAGQQMTGQQFYTQPENWRRVAHIIADAIYKQITGEEGYFDTRVVFVSESGTKQQRKRQLAIMDQDGFNVRMLTDGSDLVLTPRFSPSRQEVTYMSFANQQPRVYLLQLETGQREVVGNFPGMTFSPRFSPDGQKVIMSLQQDANSNIYTMDLRSRTTTRLTSTAAIDTSPSYSPDGARVSFESDRGGKPQIYVMNADGSGQTRISFGDGSYSTPVWSPRGDLIAFTKQAGGKFSIGVMKPDGSGERILTTGFHNEGPTWAPNGRVLMFFRQAAGAGGPQLYSIDLTGYNEQLVKTPSYGSDPAWSPLME.

The N-terminal stretch at 1-28 is a signal peptide; that stretch reads MVKCSLIRALMVIAGLIGAAAFTTPANA. Residues 288–310 are disordered; the sequence is STAAIDTSPSYSPDGARVSFESD.

It belongs to the TolB family. As to quaternary structure, the Tol-Pal system is composed of five core proteins: the inner membrane proteins TolA, TolQ and TolR, the periplasmic protein TolB and the outer membrane protein Pal. They form a network linking the inner and outer membranes and the peptidoglycan layer.

The protein localises to the periplasm. Functionally, part of the Tol-Pal system, which plays a role in outer membrane invagination during cell division and is important for maintaining outer membrane integrity. This chain is Tol-Pal system protein TolB, found in Rhizobium leguminosarum bv. trifolii (strain WSM2304).